Reading from the N-terminus, the 146-residue chain is Small ribosomal subunit protein eS19 (146 aa).

Belongs to the eukaryotic ribosomal protein eS19 family.

This Oryza sativa subsp. japonica (Rice) protein is Small ribosomal subunit protein eS19 (RPS19A).